Consider the following 186-residue polypeptide: Threonylcarbamoyl-AMP synthase (186 aa).

In terms of domain architecture, YrdC-like spans 2-186 (PNEFELAVAA…ARTGAIIRPS (185 aa)).

The protein belongs to the SUA5 family. TsaC subfamily.

The protein resides in the cytoplasm. It carries out the reaction L-threonine + hydrogencarbonate + ATP = L-threonylcarbamoyladenylate + diphosphate + H2O. In terms of biological role, required for the formation of a threonylcarbamoyl group on adenosine at position 37 (t(6)A37) in tRNAs that read codons beginning with adenine. Catalyzes the conversion of L-threonine, HCO(3)(-)/CO(2) and ATP to give threonylcarbamoyl-AMP (TC-AMP) as the acyladenylate intermediate, with the release of diphosphate. This chain is Threonylcarbamoyl-AMP synthase, found in Aeromonas hydrophila subsp. hydrophila (strain ATCC 7966 / DSM 30187 / BCRC 13018 / CCUG 14551 / JCM 1027 / KCTC 2358 / NCIMB 9240 / NCTC 8049).